Consider the following 337-residue polypeptide: Trace amine-associated receptor 5 (337 aa).

Over Met-1–Tyr-38 the chain is Extracellular. Asn-21 carries an N-linked (GlcNAc...) asparagine glycan. Disulfide bonds link Cys-24/Cys-188 and Cys-99/Cys-192. The helical transmembrane segment at Leu-39–Val-59 threads the bilayer. Residues Ser-60 to Asn-70 are Cytoplasmic-facing. A helical transmembrane segment spans residues Phe-71–Ser-91. Topologically, residues Thr-92–Leu-109 are extracellular. The helical transmembrane segment at His-110 to Ile-130 threads the bilayer. The Cytoplasmic segment spans residues Asp-131–Tyr-154. A helical transmembrane segment spans residues Ile-155 to Val-175. The extracellular Loop 2 (ECL2) stretch occupies residues Glu-176–Val-189. Residues Glu-176–Asn-204 lie on the Extracellular side of the membrane. A helical membrane pass occupies residues Phe-205–Val-225. Topologically, residues Ala-226–Thr-253 are cytoplasmic. A helical transmembrane segment spans residues Leu-254–Val-274. The Extracellular portion of the chain corresponds to Asp-275–Pro-284. The chain crosses the membrane as a helical span at residues Leu-285–Phe-307. Topologically, residues Ser-308–Asp-337 are cytoplasmic.

The protein belongs to the G-protein coupled receptor 1 family.

The protein localises to the cell membrane. Olfactory receptor specific for trimethylamine, a trace amine enriched in the urine of male rats, playing a role in social behavior. Also activated by N-methylpiperidine. Trimethylamine is present at high concentration in the urine of male after puberty and acts as an attractant. Trimethylamine-binding causes a conformation change that triggers signaling via G(s)-class of G alpha proteins (GNAL or GNAS). Also required to provide olfactory input into limbic brain areas to regulate emotional behaviors likely via modulation of the serotonin system. The chain is Trace amine-associated receptor 5 from Rattus norvegicus (Rat).